The sequence spans 539 residues: Sorting nexin-27 (539 aa).

Residues 1–40 (MADEDGEGIHPSTPHRNGGGGGGSGLHCAGNGGGGGGGPR) are disordered. Gly residues predominate over residues 17 to 39 (NGGGGGGSGLHCAGNGGGGGGGP). The PDZ domain occupies 41–134 (VVRIVKSESG…ELILTVLSVP (94 aa)). Phosphoserine occurs at positions 49 and 60. One can recognise a PX domain in the interval 159-267 (QAVPISVPTY…EFLSESDENY (109 aa)). A Ras-associating domain is found at 271–360 (SDVELRVALP…TCLTIRKWLF (90 aa)). The interval 271–360 (SDVELRVALP…TCLTIRKWLF (90 aa)) is FERM-like region F1. The FERM-like region F2 stretch occupies residues 371–419 (NDLAVTYFFHQAVDDVKKGYIKAEEKSYQLQKLYEQRKMVMYLNMLRTC). The tract at residues 423-523 (NEIIFPHCAC…RVFCELKWRK (101 aa)) is FERM-like region F3.

In terms of assembly, core component of the SNX27-retromer, a multiprotein complex composed of SNX27, the WASH complex and the retromer complex. Interacts (via PDZ domain) with a number of target transmembrane proteins (via PDZ-binding motif): ABCC4, ADRB2, ARHGEF7, GRIA1, GRIA2, GRIN1, GRIN2A GRIN2C, KCNJ6, KCNJ9 and SLC2A1/GLUT1. Interacts (via the FERM-like regions) with the WASH complex. Interacts with SNX1. Interacts with CYTIP. Interacts with DGKZ. Interacts with MCC. Interacts (via PDZ domains) with SLC9A3; directs SLC9A3 membrane insertion from early endosomes to the plasma membrane. As to expression, isoform 1 is predominantly expressed in the testis, whereas isoform 2 is predominant in various brain regions, including, neocortex, paleocortex, striatum, hippocampus, cerebellum and brain stem. Expressed in cells of hematopoietic origin.

The protein localises to the early endosome membrane. The protein resides in the cytoplasm. Its subcellular location is the cytosol. In terms of biological role, involved in the retrograde transport from endosome to plasma membrane, a trafficking pathway that promotes the recycling of internalized transmembrane proteins. Following internalization, endocytosed transmembrane proteins are delivered to early endosomes and recycled to the plasma membrane instead of being degraded in lysosomes. SNX27 specifically binds and directs sorting of a subset of transmembrane proteins containing a PDZ-binding motif at the C-terminus: following interaction with target transmembrane proteins, associates with the retromer complex, preventing entry into the lysosomal pathway, and promotes retromer-tubule based plasma membrane recycling. SNX27 also binds with the WASH complex. Interacts with membranes containing phosphatidylinositol-3-phosphate (PtdIns(3P)). May participate in establishment of natural killer cell polarity. Recruits CYTIP to early endosomes. The protein is Sorting nexin-27 (Snx27) of Rattus norvegicus (Rat).